The following is a 152-amino-acid chain: Protein Smg homolog (152 aa).

This sequence belongs to the Smg family.

This Nitrosomonas europaea (strain ATCC 19718 / CIP 103999 / KCTC 2705 / NBRC 14298) protein is Protein Smg homolog.